Here is a 78-residue protein sequence, read N- to C-terminus: MNRTKLVLGAVILGSTLLAGCSSNAKIDQLSSDVQTLNAKVDQLSNDVNAMRSDVQAAKDDAARANQRLDNQATKYRK.

The N-terminal stretch at 1 to 20 (MNRTKLVLGAVILGSTLLAG) is a signal peptide. Cysteine 21 is lipidated: N-palmitoyl cysteine. Cysteine 21 is lipidated: S-diacylglycerol cysteine. 2 consecutive repeats follow at residues 24–34 (NAKIDQLSSDV) and 38–48 (NAKVDQLSNDV). Residues 27 to 75 (IDQLSSDVQTLNAKVDQLSNDVNAMRSDVQAAKDDAARANQRLDNQATK) are a coiled coil. The disordered stretch occupies residues 56 to 78 (QAAKDDAARANQRLDNQATKYRK). Residues 68-78 (RLDNQATKYRK) are compositionally biased toward polar residues. Lysine 78 is modified (N6-murein peptidoglycan lysine).

Belongs to the Lpp family. In terms of assembly, homotrimer.

The protein resides in the cell outer membrane. Its subcellular location is the secreted. The protein localises to the cell wall. In terms of biological role, a highly abundant outer membrane lipoprotein that controls the distance between the inner and outer membranes. The only protein known to be covalently linked to the peptidoglycan network (PGN). Also non-covalently binds the PGN. The link between the cell outer membrane and PGN contributes to maintenance of the structural and functional integrity of the cell envelope, and maintains the correct distance between the PGN and the outer membrane. The chain is Major outer membrane lipoprotein Lpp 1 from Salmonella paratyphi A (strain ATCC 9150 / SARB42).